Reading from the N-terminus, the 72-residue chain is Seed trypsin/chymotrypsin inhibitor IVB (72 aa).

Disulfide bonds link C8/C61, C9/C24, C12/C57, C14/C22, C31/C38, C35/C50, and C40/C48.

The protein belongs to the Bowman-Birk serine protease inhibitor family. As to expression, seed.

Functionally, inhibitor of trypsin and of chymotrypsin. May function as a natural phytochemical defense against predators. This is Seed trypsin/chymotrypsin inhibitor IVB from Pisum sativum (Garden pea).